Here is a 166-residue protein sequence, read N- to C-terminus: NSAAIFNFSYERYDWVRPGIMLYGISPFADKNGVDLELQPVMHVVSRLISVKQLRQGESVGYGATWQCPEDMQVGILSLGYGDGYPRLAASGTPFLVRGQRCALIGRVSMDMIAIDLRRCPDAGVGEAVTVWGQDLPVEEIARHVGTIAYELVCNMPLRAPYIWQE.

The Proton acceptor; specific for L-alanine role is filled by Y62. M110 is a binding site for substrate.

Belongs to the alanine racemase family. Pyridoxal 5'-phosphate serves as cofactor.

It catalyses the reaction L-alanine = D-alanine. The protein operates within amino-acid biosynthesis; D-alanine biosynthesis; D-alanine from L-alanine: step 1/1. Catalyzes the interconversion of L-alanine and D-alanine. May also act on other amino acids. This is Alanine racemase (alr) from Piscirickettsia salmonis.